The sequence spans 142 residues: 5-hydroxymethyl-dUMP N-hydrolase (142 aa).

Residues G7, I9, R10, G11, S78, G80, E84, and S108 each coordinate 5-hydroxymethyl-dUMP.

It belongs to the 2'-deoxynucleoside 5'-phosphate N-hydrolase 1 family. In terms of assembly, monomer and homodimer.

The protein resides in the cytoplasm. It is found in the nucleus. The enzyme catalyses 5-hydroxymethyl-dUMP + H2O = 5-hydroxymethyluracil + 2-deoxy-D-ribose 5-phosphate. Part of a nucleotide salvage pathway that eliminates epigenetically modified 5-hydroxymethyl-dCMP (hmdCMP) in a two-step process entailing deamination to cytotoxic 5-hydroxymethyl-dUMP (hmdUMP), followed by its hydrolysis into 5-hydroxymethyluracil (hmU) and 2-deoxy-D-ribose 5-phosphate (deoxyribosephosphate). Catalyzes the second step in that pathway, the hydrolysis of the N-glycosidic bond in hmdUMP, degrading this cytotoxic nucleotide to avoid its genomic integration. This Tetraodon nigroviridis (Spotted green pufferfish) protein is 5-hydroxymethyl-dUMP N-hydrolase (dnph1).